We begin with the raw amino-acid sequence, 509 residues long: MEGNARGGGHSEALKNYNLGRTLGIGSFGKVKIAEHKLTGHRVAIKILNRRQMRNMEMEEKAKREIKILRLFIHPHIIRLYEVIYTPTDIYVVMEYCKFGELFDYIVEKGRLQEDEARRIFQQIISGVEYCHRNMVVHRDLKPENLLLDSKYNVKLADFGLSNVMHDGHFLKTSCGSPNYAAPEVISGKLYAGPEVDVWSCGVILYALLCGTLPFDDENIPNLFKKIKGGIYTLPSHLSALARDLIPRMLVVDPMKRITIREIREHQWFQIRLPRYLAVPPPDTAQQAKMIDEDTLQDVVNLGYEKDHVCESLRNRLQNEATVAYYLLLDNRFRATSGYLGADYQESLERNLNRFASSESASSNTRHYLPGSSDPHASGLRPHYPVERKWALGLQSRAQPREIMIEVLKALEDLNVCWKKNGQYNMKCRWSVGYPQATDMLDVNHSFVDDSIIMDNGDVNGRLPAVIKFEIQLYKSRDEKYLLDMQRVTGPQLLFLDFCAAFLTKLRVL.

Residues 17-269 enclose the Protein kinase domain; that stretch reads YNLGRTLGIG…IREIREHQWF (253 aa). ATP is bound by residues 23–31 and Lys-46; that span reads LGIGSFGKV. Residue Asp-140 is the Proton acceptor of the active site. Residues 290 to 330 form the UBA domain; sequence MIDEDTLQDVVNLGYEKDHVCESLRNRLQNEATVAYYLLLD. In terms of domain architecture, KA1 spans 460-508; that stretch reads NGRLPAVIKFEIQLYKSRDEKYLLDMQRVTGPQLLFLDFCAAFLTKLRV.

The protein belongs to the protein kinase superfamily. Ser/Thr protein kinase family. Interacts with HDR1. Strongly expressed in immature seeds. Mostly expressed in panicles, leaf sheaths and roots, and to a lower extent, in germinating seeds and leaf blades.

The protein localises to the nucleus. It carries out the reaction L-seryl-[protein] + ATP = O-phospho-L-seryl-[protein] + ADP + H(+). The catalysed reaction is L-threonyl-[protein] + ATP = O-phospho-L-threonyl-[protein] + ADP + H(+). Functionally, suppressor of flowering in long days (LD) via the that up-regulation of HD1 and the down-regulation of EHD1. Can phosphorylate HD1 in the presence of HDR1. The protein is Serine/threonine protein kinase OSK4 of Oryza sativa subsp. indica (Rice).